The sequence spans 322 residues: Homoserine kinase (322 aa).

An ATP-binding site is contributed by 106-116 (ALSSGMGGSAA).

This sequence belongs to the GHMP kinase family. Homoserine kinase subfamily.

The protein resides in the cytoplasm. The enzyme catalyses L-homoserine + ATP = O-phospho-L-homoserine + ADP + H(+). It participates in amino-acid biosynthesis; L-threonine biosynthesis; L-threonine from L-aspartate: step 4/5. In terms of biological role, catalyzes the ATP-dependent phosphorylation of L-homoserine to L-homoserine phosphate. The protein is Homoserine kinase of Xanthomonas campestris pv. campestris (strain B100).